The primary structure comprises 190 residues: ATP synthase subunit b, chloroplastic (190 aa).

A helical transmembrane segment spans residues 35 to 55 (LSVVLGVLIFFGKGVCASCLL).

Belongs to the ATPase B chain family. F-type ATPases have 2 components, F(1) - the catalytic core - and F(0) - the membrane proton channel. F(1) has five subunits: alpha(3), beta(3), gamma(1), delta(1), epsilon(1). F(0) has four main subunits: a(1), b(1), b'(1) and c(10-14). The alpha and beta chains form an alternating ring which encloses part of the gamma chain. F(1) is attached to F(0) by a central stalk formed by the gamma and epsilon chains, while a peripheral stalk is formed by the delta, b and b' chains.

It localises to the plastid. Its subcellular location is the chloroplast thylakoid membrane. In terms of biological role, f(1)F(0) ATP synthase produces ATP from ADP in the presence of a proton or sodium gradient. F-type ATPases consist of two structural domains, F(1) containing the extramembraneous catalytic core and F(0) containing the membrane proton channel, linked together by a central stalk and a peripheral stalk. During catalysis, ATP synthesis in the catalytic domain of F(1) is coupled via a rotary mechanism of the central stalk subunits to proton translocation. Functionally, component of the F(0) channel, it forms part of the peripheral stalk, linking F(1) to F(0). In Coffea arabica (Arabian coffee), this protein is ATP synthase subunit b, chloroplastic.